The following is a 63-amino-acid chain: Putative F-box protein At1g47702 (63 aa).

Positions K23–N63 constitute an F-box domain.

The sequence is that of Putative F-box protein At1g47702 from Arabidopsis thaliana (Mouse-ear cress).